Here is a 248-residue protein sequence, read N- to C-terminus: Ubiquinone/menaquinone biosynthesis C-methyltransferase UbiE (248 aa).

2 residues coordinate S-adenosyl-L-methionine: Ser68 and Asp92.

The protein belongs to the class I-like SAM-binding methyltransferase superfamily. MenG/UbiE family.

It carries out the reaction a 2-demethylmenaquinol + S-adenosyl-L-methionine = a menaquinol + S-adenosyl-L-homocysteine + H(+). The catalysed reaction is a 2-methoxy-6-(all-trans-polyprenyl)benzene-1,4-diol + S-adenosyl-L-methionine = a 5-methoxy-2-methyl-3-(all-trans-polyprenyl)benzene-1,4-diol + S-adenosyl-L-homocysteine + H(+). It participates in quinol/quinone metabolism; menaquinone biosynthesis; menaquinol from 1,4-dihydroxy-2-naphthoate: step 2/2. The protein operates within cofactor biosynthesis; ubiquinone biosynthesis. Functionally, methyltransferase required for the conversion of demethylmenaquinol (DMKH2) to menaquinol (MKH2) and the conversion of 2-polyprenyl-6-methoxy-1,4-benzoquinol (DDMQH2) to 2-polyprenyl-3-methyl-6-methoxy-1,4-benzoquinol (DMQH2). In Rickettsia peacockii (strain Rustic), this protein is Ubiquinone/menaquinone biosynthesis C-methyltransferase UbiE.